Reading from the N-terminus, the 804-residue chain is MAHSMSRPVAATAAALLALALPQALAQANTSYVDYNIEANPDLYPLCIETIPLSFPDCQNGPLRSHLICDETATPYDRAASLISLFTLDELIANTGNTGLGVSRLGLPAYQVWSEALHGLDRANFSDSGAYNWATSFPQPILTTAALNRTLIHQIASIISTQGRAFNNAGRYGLDVYAPNINTFRHPVWGRGQETPGEDVSLAAVYAYEYITGIQGPDPESNLKLAATAKHYAGYDIENWHNHSRLGNDMNITQQDLSEYYTPQFHVAARDAKVQSVMCAYNAVNGVPACADSYFLQTLLRDTFGFVDHGYVSSDCDAAYNIYNPHGYASSQAAAAAEAILAGTDIDCGTTYQWHLNESIAAGDLSRDDIEQGVIRLYTTLVQAGYFDSNTTKANNPYRDLSWSDVLETDAWNISYQAATQGIVLLKNSNNVLPLTEKAYPPSNTTVALIGPWANATTQLLGNYYGNAPYMISPRAAFEEAGYKVNFAEGTGISSTSTSGFAAALSAAQSADVIIYAGGIDNTLEAEALDRESIAWPGNQLDLIQKLASAAGKKPLIVLQMGGGQVDSSSLKNNTNVSALLWGGYPGQSGGFALRDIITGKKNPAGRLVTTQYPASYAEEFPATDMNLRPEGDNPGQTYKWYTGEAVYEFGHGLFYTTFAESSSNTTTKEVKLNIQDILSQTHEDLASITQLPVLNFTANIRNTGKLESDYTAMVFANTSDAGPAPYPKKWLVGWDRLGEVKVGETRELRVPVEVGSFARVNEDGDWVVFPGTFELALNLERKVRVKVVLEGEEEVVLKWPGKE.

The signal sequence occupies residues Met-1–Ala-26. Asn-29, Asn-124, Asn-148, Asn-242, and Asn-251 each carry an N-linked (GlcNAc...) asparagine glycan. Residue Asp-315 is part of the active site. N-linked (GlcNAc...) asparagine glycosylation is found at Asn-357, Asn-390, Asn-413, Asn-444, Asn-455, Asn-573, Asn-576, Asn-665, Asn-696, and Asn-718.

The protein belongs to the glycosyl hydrolase 3 family.

It localises to the secreted. The catalysed reaction is Hydrolysis of (1-&gt;4)-beta-D-xylans, to remove successive D-xylose residues from the non-reducing termini.. The protein operates within glycan degradation; xylan degradation. Its function is as follows. Xylan 1,4-beta-xylosidase involved in the hydrolysis of xylan, a major structural heterogeneous polysaccharide found in plant biomass representing the second most abundant polysaccharide in the biosphere, after cellulose. The polypeptide is Probable exo-1,4-beta-xylosidase xlnD (xlnD) (Aspergillus niger (strain ATCC MYA-4892 / CBS 513.88 / FGSC A1513)).